The sequence spans 1429 residues: Nitric oxide synthase 1 (1429 aa).

Residues 1-200 (MEENTFGVQQ…LQDIGEHDEL (200 aa)) form an interaction with NOSIP region. The region spanning 17-99 (SVRLFKRKVG…ETHVVLILRG (83 aa)) is the PDZ domain. Disordered stretches follow at residues 152-174 (VTGL…SVSQ), 214-255 (GSKA…DNDR), and 271-298 (NNPY…SRCP). Residues 160 to 174 (QHAQGHGQGAGSVSQ) show a composition bias toward low complexity. The interval 163–240 (QGHGQGAGSV…TGIQVDRDLD (78 aa)) is interaction with DYNLL1/PIN. The span at 226–243 (AEMKDTGIQVDRDLDGKS) shows a compositional bias: basic and acidic residues. A Phosphoserine modification is found at serine 280. The span at 280–294 (SPTSGKQSPTKNGSP) shows a compositional bias: polar residues. Position 334 (serine 334) interacts with (6R)-L-erythro-5,6,7,8-tetrahydrobiopterin. A heme b-binding site is contributed by cysteine 415. Residues glutamine 478, tryptophan 587, tyrosine 588, and glutamate 592 each coordinate L-arginine. Residues valine 677, tryptophan 678, and phenylalanine 691 each contribute to the (6R)-L-erythro-5,6,7,8-tetrahydrobiopterin site. A heme b-binding site is contributed by tyrosine 706. The tract at residues 725 to 745 (KRRAIGFKKLAEAVKFSAKLM) is calmodulin-binding. One can recognise a Flavodoxin-like domain in the interval 755-935 (ATILYATETG…AFRTWAKKVF (181 aa)). Residues threonine 761, glutamate 762, threonine 763, lysine 765, serine 766, serine 807, threonine 808, and glycine 812 each contribute to the FMN site. 3 positions are modified to phosphoserine: serine 847, serine 857, and serine 858. FMN-binding residues include serine 886, histidine 891, cysteine 893, glutamate 919, and glutamine 923. Positions 990–1237 (KRVSAARLLS…VRGAPSFHLP (248 aa)) constitute an FAD-binding FR-type domain. NADP(+) is bound at residue arginine 1010. Positions 1032, 1173, 1174, 1175, 1176, 1191, and 1193 each coordinate FAD. Position 1196 (serine 1196) interacts with NADP(+). Tyrosine 1197, valine 1210, cysteine 1211, and serine 1212 together coordinate FAD. NADP(+)-binding residues include threonine 1251, arginine 1284, serine 1313, arginine 1314, lysine 1320, tyrosine 1322, glutamine 1324, aspartate 1357, threonine 1398, and arginine 1400.

Belongs to the NOS family. Homodimer. Interacts with DLG4 (via N-terminal tandem pair of PDZ domains); the interaction possibly being prevented by the association between NOS1 and CAPON. Forms a ternary complex with CAPON and RASD1. Forms a ternary complex with CAPON and SYN1. Interacts with ZDHHC23. Interacts with NOSIP; which may impair its synaptic location. Interacts with HTR4. Interacts with SLC6A4. Interacts with VAC14. Forms a complex with ASL, ASS1 and SLC7A1; the complex regulates cell-autonomous L-arginine synthesis and citrulline recycling while channeling extracellular L-arginine to nitric oxide synthesis pathway. Interacts with DMD; localizes NOS1 to sarcolemma in muscle cells. Interacts with DYNLL1; inhibits the nitric oxide synthase activity. It depends on heme b as a cofactor. FAD serves as cofactor. The cofactor is FMN. Requires (6R)-L-erythro-5,6,7,8-tetrahydrobiopterin as cofactor. In terms of processing, ubiquitinated; mediated by STUB1/CHIP in the presence of Hsp70 and Hsp40 (in vitro). As to expression, isoform N-NOS-1 is expressed in brain and colorectum. Found in the Auerbach's plexus of the enteric nervous system. Isoform PNNOS is expressed in the penis, urethra, prostate, and skeletal muscle, and coexists with the cerebellar nnos in the pelvic plexus, bladder and liver, and is detectable in the cerebellum.

The protein localises to the cell membrane. Its subcellular location is the sarcolemma. It localises to the cell projection. It is found in the dendritic spine. It carries out the reaction 2 L-arginine + 3 NADPH + 4 O2 + H(+) = 2 L-citrulline + 2 nitric oxide + 3 NADP(+) + 4 H2O. With respect to regulation, stimulated by calcium/calmodulin. Inhibited by DYNLL1 that prevents the dimerization of the protein. Inhibited by NOSIP. Its function is as follows. Produces nitric oxide (NO) which is a messenger molecule with diverse functions throughout the body. In the brain and peripheral nervous system, NO displays many properties of a neurotransmitter. Inhibitory transmitter for non-adrenergic and non-cholinergic nerves in the colorectum. Probably has nitrosylase activity and mediates cysteine S-nitrosylation of cytoplasmic target proteins such SRR. Inhibitory transmitter for non-adrenergic and non-cholinergic nerves in the colorectum. The polypeptide is Nitric oxide synthase 1 (Rattus norvegicus (Rat)).